A 341-amino-acid polypeptide reads, in one-letter code: S-adenosylmethionine:tRNA ribosyltransferase-isomerase (341 aa).

It belongs to the QueA family. In terms of assembly, monomer.

The protein resides in the cytoplasm. It carries out the reaction 7-aminomethyl-7-carbaguanosine(34) in tRNA + S-adenosyl-L-methionine = epoxyqueuosine(34) in tRNA + adenine + L-methionine + 2 H(+). Its pathway is tRNA modification; tRNA-queuosine biosynthesis. Functionally, transfers and isomerizes the ribose moiety from AdoMet to the 7-aminomethyl group of 7-deazaguanine (preQ1-tRNA) to give epoxyqueuosine (oQ-tRNA). The polypeptide is S-adenosylmethionine:tRNA ribosyltransferase-isomerase (Clostridium perfringens (strain ATCC 13124 / DSM 756 / JCM 1290 / NCIMB 6125 / NCTC 8237 / Type A)).